We begin with the raw amino-acid sequence, 180 residues long: NADH-quinone oxidoreductase subunit I (180 aa).

2 4Fe-4S ferredoxin-type domains span residues 50 to 80 (LTRN…LQKS) and 90 to 119 (KFFR…LMPD). Residues cysteine 60, cysteine 63, cysteine 66, cysteine 70, cysteine 99, cysteine 102, cysteine 105, and cysteine 109 each contribute to the [4Fe-4S] cluster site.

The protein belongs to the complex I 23 kDa subunit family. NDH-1 is composed of 13 different subunits. Subunits NuoA, H, J, K, L, M, N constitute the membrane sector of the complex. It depends on [4Fe-4S] cluster as a cofactor.

The protein resides in the cell membrane. It carries out the reaction a quinone + NADH + 5 H(+)(in) = a quinol + NAD(+) + 4 H(+)(out). Functionally, NDH-1 shuttles electrons from NADH, via FMN and iron-sulfur (Fe-S) centers, to quinones in the respiratory chain. The immediate electron acceptor for the enzyme in this species is believed to be ubiquinone. Couples the redox reaction to proton translocation (for every two electrons transferred, four hydrogen ions are translocated across the cytoplasmic membrane), and thus conserves the redox energy in a proton gradient. The protein is NADH-quinone oxidoreductase subunit I of Buchnera aphidicola subsp. Acyrthosiphon pisum (strain APS) (Acyrthosiphon pisum symbiotic bacterium).